Consider the following 158-residue polypeptide: Small ribosomal subunit protein uS15 (158 aa).

Residues Met1 to Pro18 are compositionally biased toward basic residues. A disordered region spans residues Met1–Ala21.

It belongs to the universal ribosomal protein uS15 family. As to quaternary structure, part of the 30S ribosomal subunit.

This chain is Small ribosomal subunit protein uS15, found in Pyrococcus abyssi (strain GE5 / Orsay).